A 1334-amino-acid polypeptide reads, in one-letter code: Aldehyde oxidase 1 (1334 aa).

A 2Fe-2S ferredoxin-type domain is found at Pro5–Ile92. 4 residues coordinate [2Fe-2S] cluster: Cys44, Cys49, Cys52, and Cys74. Gln113 serves as a coordination point for Mo-molybdopterin. The [2Fe-2S] cluster site is built by Cys114, Cys117, Cys149, and Cys151. Cys151 contributes to the Mo-molybdopterin binding site. Residues Phe236 to Lys421 enclose the FAD-binding PCMH-type domain. FAD-binding positions include Val264–Val271, Ala345, Ser354, His358, Asp367, and Leu411. Mo-molybdopterin-binding positions include Ala802–Phe803 and Met1043. Phosphoserine is present on Ser1064. Residues Gly1084–Val1087, Gln1199, and Leu1264 contribute to the Mo-molybdopterin site. The active-site Proton acceptor; for azaheterocycle hydroxylase activity is Glu1266.

It belongs to the xanthine dehydrogenase family. As to quaternary structure, homodimer. [2Fe-2S] cluster is required as a cofactor. The cofactor is FAD. Mo-molybdopterin serves as cofactor. In terms of processing, the N-terminus is blocked. Very high expression in liver and lung. High expression in kidney, pancreas, brain stem and spinal cord. Moderate expression in heart, testis, eye, cerebral cortex and cerebellum. Low expression in stomach and muscle.

Its subcellular location is the cytoplasm. It catalyses the reaction an aldehyde + O2 + H2O = a carboxylate + H2O2 + H(+). The catalysed reaction is retinal + O2 + H2O = retinoate + H2O2 + H(+). The enzyme catalyses all-trans-retinal + O2 + H2O = all-trans-retinoate + H2O2 + H(+). Its activity is regulated as follows. Inhibited by hydralazine and menadione. Not inhibited by BOF-4272 or allopurinol, xanthine dehydrogenase potent inhibitors. In contrast to guinea pig, human and rat, isovanillin is not an inhibitor but a substrate for AOX1 in rabbit. Oxidase with broad substrate specificity, oxidizing aromatic azaheterocycles, such as N1-methylnicotinamide, N-methylphthalazinium and phthalazine, as well as aldehydes, such as benzaldehyde, retinal, pyridoxal, and vanillin. Plays a key role in the metabolism of xenobiotics and drugs containing aromatic azaheterocyclic substituents. Participates in the bioactivation of prodrugs such as famciclovir, catalyzing the oxidation step from 6-deoxypenciclovir to penciclovir, which is a potent antiviral agent. Is probably involved in the regulation of reactive oxygen species homeostasis. May be a prominent source of superoxide generation via the one-electron reduction of molecular oxygen. May also catalyze nitric oxide (NO) production via the reduction of nitrite to NO with NADH or aldehyde as electron donor. May play a role in adipogenesis. Cannot use hypoxanthine and all-trans-retinol as substrate. This Oryctolagus cuniculus (Rabbit) protein is Aldehyde oxidase 1.